The following is a 262-amino-acid chain: Acyl-[acyl-carrier-protein]--UDP-N-acetylglucosamine O-acyltransferase (262 aa).

This sequence belongs to the transferase hexapeptide repeat family. LpxA subfamily. As to quaternary structure, homotrimer.

It is found in the cytoplasm. It carries out the reaction a (3R)-hydroxyacyl-[ACP] + UDP-N-acetyl-alpha-D-glucosamine = a UDP-3-O-[(3R)-3-hydroxyacyl]-N-acetyl-alpha-D-glucosamine + holo-[ACP]. It functions in the pathway glycolipid biosynthesis; lipid IV(A) biosynthesis; lipid IV(A) from (3R)-3-hydroxytetradecanoyl-[acyl-carrier-protein] and UDP-N-acetyl-alpha-D-glucosamine: step 1/6. Involved in the biosynthesis of lipid A, a phosphorylated glycolipid that anchors the lipopolysaccharide to the outer membrane of the cell. In Burkholderia lata (strain ATCC 17760 / DSM 23089 / LMG 22485 / NCIMB 9086 / R18194 / 383), this protein is Acyl-[acyl-carrier-protein]--UDP-N-acetylglucosamine O-acyltransferase.